Consider the following 153-residue polypeptide: 3-hydroxyacyl-[acyl-carrier-protein] dehydratase FabZ (153 aa).

The active site involves histidine 57.

Belongs to the thioester dehydratase family. FabZ subfamily.

It is found in the cytoplasm. It carries out the reaction a (3R)-hydroxyacyl-[ACP] = a (2E)-enoyl-[ACP] + H2O. Its function is as follows. Involved in unsaturated fatty acids biosynthesis. Catalyzes the dehydration of short chain beta-hydroxyacyl-ACPs and long chain saturated and unsaturated beta-hydroxyacyl-ACPs. The sequence is that of 3-hydroxyacyl-[acyl-carrier-protein] dehydratase FabZ from Vibrio cholerae serotype O1 (strain ATCC 39315 / El Tor Inaba N16961).